A 398-amino-acid chain; its full sequence is Calreticulin (398 aa).

A signal peptide spans 1–19 (MKAVVLVVVSLLALSSINC). Positions 20–197 (DVFFEEKFPD…NEKVESGDLE (178 aa)) are N-domain. An intrachain disulfide couples cysteine 105 to cysteine 137. The an alpha-D-glucoside site is built by tyrosine 109, lysine 111, tyrosine 128, and aspartate 135. 7 consecutive repeat copies span residues 191–202 (VESGDLEADWDF), 210–221 (DPEAKKPEDWDD), 227–238 (DPEDKKPEDWDK), 244–255 (DPDATKPEDWDD), 259–269 (GEWEPPMIDNP), 273–283 (GVWAPKQIDNP), and 287–297 (GPWVHPEIDNP). The tract at residues 191-255 (VESGDLEADW…DATKPEDWDD (65 aa)) is 4 X approximate repeats. A P-domain region spans residues 198 to 308 (ADWDFLPNKK…YTPDSNLYKR (111 aa)). Basic and acidic residues predominate over residues 207 to 251 (KIKDPEAKKPEDWDDKPTIPDPEDKKPEDWDKPEHIPDPDATKPE). Residues 207–257 (KIKDPEAKKPEDWDDKPTIPDPEDKKPEDWDKPEHIPDPDATKPEDWDDEM) form a disordered region. The interval 259–297 (GEWEPPMIDNPDYKGVWAPKQIDNPAYKGPWVHPEIDNP) is 3 X approximate repeats. The C-domain stretch occupies residues 309 to 398 (DEICAVGLDL…AAPVEEHDEL (90 aa)). Residue aspartate 317 participates in an alpha-D-glucoside binding. The tract at residues 334–398 (DDPAAAKERG…AAPVEEHDEL (65 aa)) is disordered. The span at 337–372 (AAAKERGEVIKKRQEGEKKMKSEQDEAEREKEKAEK) shows a compositional bias: basic and acidic residues. Residues 373 to 387 (PDDEEDDEDLDDETG) are compositionally biased toward acidic residues. The short motif at 395–398 (HDEL) is the Prevents secretion from ER element.

Belongs to the calreticulin family. Monomer. As to expression, expressed in fat bodies. Not expressed in midgut, silk gland, ovary or testis.

The protein localises to the endoplasmic reticulum lumen. Its function is as follows. Molecular calcium-binding chaperone promoting folding, oligomeric assembly and quality control in the ER via the calreticulin/calnexin cycle. This lectin may interact transiently with almost all of the monoglucosylated glycoproteins that are synthesized in the ER. The chain is Calreticulin from Bombyx mori (Silk moth).